We begin with the raw amino-acid sequence, 350 residues long: Protein-glutamate methylesterase/protein-glutamine glutaminase (350 aa).

Residues 5-122 (RVLCVDDSAL…REGMLAYSEL (118 aa)) enclose the Response regulatory domain. At aspartate 56 the chain carries 4-aspartylphosphate. One can recognise a CheB-type methylesterase domain in the interval 153 to 345 (LLSSEKLIAI…QRMLAQISAG (193 aa)). Residues serine 165, histidine 191, and aspartate 287 contribute to the active site.

Belongs to the CheB family. Post-translationally, phosphorylated by CheA. Phosphorylation of the N-terminal regulatory domain activates the methylesterase activity.

The protein resides in the cytoplasm. The enzyme catalyses [protein]-L-glutamate 5-O-methyl ester + H2O = L-glutamyl-[protein] + methanol + H(+). It catalyses the reaction L-glutaminyl-[protein] + H2O = L-glutamyl-[protein] + NH4(+). Involved in chemotaxis. Part of a chemotaxis signal transduction system that modulates chemotaxis in response to various stimuli. Catalyzes the demethylation of specific methylglutamate residues introduced into the chemoreceptors (methyl-accepting chemotaxis proteins or MCP) by CheR. Also mediates the irreversible deamidation of specific glutamine residues to glutamic acid. Does not interact with the C-terminal pentapeptide of the chemoreceptors. In Pectobacterium atrosepticum (strain SCRI 1043 / ATCC BAA-672) (Erwinia carotovora subsp. atroseptica), this protein is Protein-glutamate methylesterase/protein-glutamine glutaminase.